The chain runs to 330 residues: Lymphocyte-specific protein 1 (330 aa).

2 stretches are compositionally biased toward basic and acidic residues: residues 1-20 (MAEAAIDPRCEEQEELHAED) and 37-62 (AREQRQRERERQLQDQDKDKEDDGGH). Disordered stretches follow at residues 1-246 (MAEA…SIEL) and 281-302 (DMSKKSLWEQKGGSKISSTIKS). Positions 66-77 (QPGQQTLISLKS) are enriched in polar residues. 2 positions are modified to phosphoserine; by CK2: Ser77 and Ser78. Basic and acidic residues predominate over residues 113 to 135 (QSERPEEKQTEESSHQAKVHLEE). Phosphothreonine is present on Thr166. Residues Ser168, Ser179, Ser180, and Ser184 each carry the phosphoserine modification. 2 stretches are compositionally biased toward polar residues: residues 206–215 (VKKSQPTLPI) and 223–242 (QQYTQATESSGRTPKLSRQP). A Phosphoserine; by MAPKAPK2 modification is found at Ser243. A compositionally biased stretch (low complexity) spans 291 to 302 (KGGSKISSTIKS). Lys318 bears the N6-acetyllysine mark.

Post-translationally, phosphorylated by casein kinase II, protein kinase C and MAPKAPK2. Phosphorylation by PKC induces translocation from membrane to cytoplasm. Phosphorylation by MAPKAPK2 may regulate neutrophil chemotaxis. Isoform 1 is expressed in normal mouse B and T-lymphocytes and in transformed B-cells but not (or in smaller amounts) in nine T-lymphoma lines tested. Isoform 2 is expressed in non-lymphoid cell lines (myocytes, stromal cells, fibroblasts).

It is found in the cell membrane. May play a role in mediating neutrophil activation and chemotaxis. This is Lymphocyte-specific protein 1 (Lsp1) from Mus musculus (Mouse).